A 194-amino-acid polypeptide reads, in one-letter code: Leucyl/phenylalanyl-tRNA--protein transferase (194 aa).

Belongs to the L/F-transferase family.

It localises to the cytoplasm. It catalyses the reaction N-terminal L-lysyl-[protein] + L-leucyl-tRNA(Leu) = N-terminal L-leucyl-L-lysyl-[protein] + tRNA(Leu) + H(+). The enzyme catalyses N-terminal L-arginyl-[protein] + L-leucyl-tRNA(Leu) = N-terminal L-leucyl-L-arginyl-[protein] + tRNA(Leu) + H(+). The catalysed reaction is L-phenylalanyl-tRNA(Phe) + an N-terminal L-alpha-aminoacyl-[protein] = an N-terminal L-phenylalanyl-L-alpha-aminoacyl-[protein] + tRNA(Phe). Functionally, functions in the N-end rule pathway of protein degradation where it conjugates Leu, Phe and, less efficiently, Met from aminoacyl-tRNAs to the N-termini of proteins containing an N-terminal arginine or lysine. The protein is Leucyl/phenylalanyl-tRNA--protein transferase of Pelodictyon phaeoclathratiforme (strain DSM 5477 / BU-1).